Consider the following 220-residue polypeptide: MQREKDSLIVVSGGMDSVTLMYEKRASIALALSFDYGSKHNARELSFARLHAERLGVEHLIIPLDFIGQYFQSDLLLSGGDIPEGRYDEENMKSTVVPFRNGIMLAVAAGLAESRGLRRIYIANHFGDHAIYPDCRASFIRPMTEAVRCGTTNGVLIEAPYTDITKTDIARIGASLGIDYAETWSCYKGGVFHCGVCGTCVERREALHDAGIPDATEYEG.

Residue 11 to 21 (VSGGMDSVTLM) participates in ATP binding. Zn(2+)-binding residues include C186, C194, C197, and C200.

It belongs to the QueC family. Zn(2+) is required as a cofactor.

It catalyses the reaction 7-carboxy-7-deazaguanine + NH4(+) + ATP = 7-cyano-7-deazaguanine + ADP + phosphate + H2O + H(+). The protein operates within purine metabolism; 7-cyano-7-deazaguanine biosynthesis. Functionally, catalyzes the ATP-dependent conversion of 7-carboxy-7-deazaguanine (CDG) to 7-cyano-7-deazaguanine (preQ(0)). This is 7-cyano-7-deazaguanine synthase from Porphyromonas gingivalis (strain ATCC BAA-308 / W83).